Reading from the N-terminus, the 207-residue chain is Outer-membrane lipoprotein LolB (207 aa).

The signal sequence occupies residues Met1 to Ala21. The N-palmitoyl cysteine moiety is linked to residue Cys22. Residue Cys22 is the site of S-diacylglycerol cysteine attachment.

Belongs to the LolB family. In terms of assembly, monomer.

The protein resides in the cell outer membrane. In terms of biological role, plays a critical role in the incorporation of lipoproteins in the outer membrane after they are released by the LolA protein. This is Outer-membrane lipoprotein LolB from Escherichia coli O127:H6 (strain E2348/69 / EPEC).